Reading from the N-terminus, the 472-residue chain is ATP synthase subunit beta (472 aa).

G157–T164 is an ATP binding site.

Belongs to the ATPase alpha/beta chains family. F-type ATPases have 2 components, CF(1) - the catalytic core - and CF(0) - the membrane proton channel. CF(1) has five subunits: alpha(3), beta(3), gamma(1), delta(1), epsilon(1). CF(0) has three main subunits: a(1), b(2) and c(9-12). The alpha and beta chains form an alternating ring which encloses part of the gamma chain. CF(1) is attached to CF(0) by a central stalk formed by the gamma and epsilon chains, while a peripheral stalk is formed by the delta and b chains.

The protein resides in the cell membrane. It catalyses the reaction ATP + H2O + 4 H(+)(in) = ADP + phosphate + 5 H(+)(out). Produces ATP from ADP in the presence of a proton gradient across the membrane. The catalytic sites are hosted primarily by the beta subunits. The polypeptide is ATP synthase subunit beta (Desulforamulus reducens (strain ATCC BAA-1160 / DSM 100696 / MI-1) (Desulfotomaculum reducens)).